The chain runs to 649 residues: Ubiquitin-associated and SH3 domain-containing protein B (649 aa).

Ser20 carries the post-translational modification Phosphoserine. Residue Thr23 is modified to Phosphothreonine. Residues 27–76 form the UBA domain; that stretch reads NRQQRPGTIKHGSALDVLLSMGFPRARAQKALASTGGRSVQAACDWLFSH. Residues 254–319 form the SH3 domain; it reads ANHETLQVIY…PENYITKADE (66 aa). The tract at residues 380–649 is protein tyrosine phosphatase; that stretch reads GPQKRCLFVC…FNWRETLLQE (270 aa). Residue Arg390 is part of the active site. Catalysis depends on His391, which acts as the Tele-phosphohistidine intermediate. His576 is an active-site residue.

As to quaternary structure, homodimer. Interacts with JAK2 (in vitro). Interacts with CBL. Part of a complex containing CBL and activated EGFR. Interacts with ubiquitin and with mono-ubiquitinated proteins. Interacts with ZAP70 (ubiquitinated form).

It localises to the cytoplasm. The protein resides in the nucleus. The enzyme catalyses O-phospho-L-tyrosyl-[protein] + H2O = L-tyrosyl-[protein] + phosphate. Functionally, interferes with CBL-mediated down-regulation and degradation of receptor-type tyrosine kinases. Promotes accumulation of activated target receptors, such as T-cell receptors and EGFR, on the cell surface. Exhibits tyrosine phosphatase activity toward several substrates including EGFR, FAK, SYK, and ZAP70. Down-regulates proteins that are dually modified by both protein tyrosine phosphorylation and ubiquitination. The polypeptide is Ubiquitin-associated and SH3 domain-containing protein B (UBASH3B) (Homo sapiens (Human)).